Reading from the N-terminus, the 103-residue chain is Co-chaperonin GroES (103 aa).

It belongs to the GroES chaperonin family. As to quaternary structure, heptamer of 7 subunits arranged in a ring. Interacts with the chaperonin GroEL.

It localises to the cytoplasm. Together with the chaperonin GroEL, plays an essential role in assisting protein folding. The GroEL-GroES system forms a nano-cage that allows encapsulation of the non-native substrate proteins and provides a physical environment optimized to promote and accelerate protein folding. GroES binds to the apical surface of the GroEL ring, thereby capping the opening of the GroEL channel. The sequence is that of Co-chaperonin GroES from Prochlorococcus marinus (strain MIT 9215).